Here is a 179-residue protein sequence, read N- to C-terminus: Diphosphoinositol polyphosphate phosphohydrolase 2 (179 aa).

Substrate-binding positions include R9, 17–19 (KKR), and 38–40 (SSR). One can recognise a Nudix hydrolase domain in the interval 17–143 (KKRAACLCFR…VHAEYLEKLK (127 aa)). G49 and E65 together coordinate Mg(2+). The Nudix box signature appears at 50–71 (GGMEPEEEPGGAAVREVYEEAG). Catalysis depends on E68, which acts as the Proton acceptor. Residue E69 participates in Mg(2+) binding. Residues 88–90 (RKH), R114, and K132 each bind substrate.

The protein belongs to the Nudix hydrolase family. DIPP subfamily. Mg(2+) is required as a cofactor. Mn(2+) serves as cofactor.

The protein localises to the cytoplasm. It catalyses the reaction diphospho-myo-inositol polyphosphate + H2O = myo-inositol polyphosphate + phosphate.. The catalysed reaction is 5-diphospho-1D-myo-inositol 1,2,3,4,6-pentakisphosphate + H2O = 1D-myo-inositol hexakisphosphate + phosphate + H(+). It carries out the reaction 3,5-bis(diphospho)-1D-myo-inositol 1,2,4,6-tetrakisphosphate + H2O = 3-diphospho-1D-myo-inositol 1,2,4,5,6-pentakisphosphate + phosphate + 2 H(+). The enzyme catalyses 5-diphospho-1D-myo-inositol 1,3,4,6-tetrakisphosphate + H2O = 1D-myo-inositol 1,3,4,5,6-pentakisphosphate + phosphate + H(+). It catalyses the reaction P(1),P(6)-bis(5'-adenosyl) hexaphosphate + H2O = 2 ATP + 2 H(+). The catalysed reaction is P(1),P(5)-bis(5'-adenosyl) pentaphosphate + H2O = ADP + ATP + 2 H(+). It carries out the reaction 5-phospho-alpha-D-ribose 1-diphosphate + H2O = alpha-D-ribose 1,5-bisphosphate + phosphate + H(+). Functionally, cleaves the beta-phosphate from diphosphoinositol polyphosphates such as PP-InsP5 (diphosphoinositol pentakisphosphate), PP-InsP4 (diphosphoinositol tetrakisphosphate) and [PP]2-InsP4 (bisdiphosphoinositol tetrakisphosphate), suggesting that it may play a role in signal transduction. Diadenosine polyphosphates, particularly Ap6A (P(1),P(6)-bis(5a-adenosyl) hexaphosphate) and Ap5A (P(1),P(5)-bis(5'-adenosyl) pentaphosphate) are downstream effectors of a signaling cascade that regulates cardiac KATP channels, can also be substrates, although with lower preference than the diphosphoinositol polyphosphates. Can also catalyze the hydrolysis of 5-phosphoribose 1-diphosphate, generating the glycolytic activator ribose 1,5-bisphosphate. Does not play a role in U8 snoRNA decapping activity. Binds U8 snoRNA. The polypeptide is Diphosphoinositol polyphosphate phosphohydrolase 2 (Mus musculus (Mouse)).